A 193-amino-acid polypeptide reads, in one-letter code: MAAIRKKLVIVGDGACGKTCLLIVFSKDQFPEVYVPTVFENYVADIEVDSKQVELALWDTAGQEDYDRLRPLSYPDTDVILMCFSIDSPDSLENIPEKWTPEVKHFCPNVPIILVGNKKDLRNDEHTRRELTKMKQEPVKAEEGRDMANRIGAFGYMECSAKTKDGVREVFEMATRAALQARRGKKSNKCCLL.

GTP contacts are provided by residues 12 to 19, 30 to 37, 59 to 63, 117 to 120, and 160 to 162; these read GDGACGKT, FPEVYVPT, DTAGQ, NKKD, and SAK. (Microbial infection) O-linked (GlcNAc) tyrosine; by Yersinia Afp18 glycosylation occurs at Tyr34. Cysteine methyl ester is present on Cys190. Cys190 is lipidated: S-geranylgeranyl cysteine. A propeptide spans 191-193 (removed in mature form); it reads CLL.

Belongs to the small GTPase superfamily. Rho family. (Microbial infection) Glycosylated at Tyr-34 by Yersinia ruckeri toxin Afp18. Mono-O-GlcNAcylation by Afp18 inhibits RhoA activation by guanine nucleotide exchange factors and blocks RhoA signaling.

It is found in the cell membrane. In terms of biological role, regulates a signal transduction pathway linking plasma membrane receptors to the assembly of focal adhesions and actin stress fibers. The protein is Rho-related GTP-binding protein RhoA-B of Danio rerio (Zebrafish).